A 101-amino-acid chain; its full sequence is Small ribosomal subunit protein uS14 (101 aa).

The protein belongs to the universal ribosomal protein uS14 family. Part of the 30S ribosomal subunit. Contacts proteins S3 and S10.

Its function is as follows. Binds 16S rRNA, required for the assembly of 30S particles and may also be responsible for determining the conformation of the 16S rRNA at the A site. The polypeptide is Small ribosomal subunit protein uS14 (Vesicomyosocius okutanii subsp. Calyptogena okutanii (strain HA)).